A 125-amino-acid chain; its full sequence is Fluoride-specific ion channel FluC (125 aa).

The next 4 helical transmembrane spans lie at 6 to 26, 34 to 54, 68 to 88, and 98 to 118; these read GFIA…SGLV, FPWG…LVWE, AVLL…IFES, and LALL…LFAG. Residues glycine 76 and threonine 79 each contribute to the Na(+) site.

It belongs to the fluoride channel Fluc/FEX (TC 1.A.43) family.

It localises to the cell inner membrane. It carries out the reaction fluoride(in) = fluoride(out). Na(+) is not transported, but it plays an essential structural role and its presence is essential for fluoride channel function. Its function is as follows. Fluoride-specific ion channel. Important for reducing fluoride concentration in the cell, thus reducing its toxicity. This is Fluoride-specific ion channel FluC from Solidesulfovibrio magneticus (strain ATCC 700980 / DSM 13731 / RS-1) (Desulfovibrio magneticus).